The sequence spans 212 residues: Prolactin-3C1 (212 aa).

A signal peptide spans 1 to 29 (MQLSLTQARTWKGLFLLVSCMFLWVYVTA). A disulfide bridge connects residues Cys-80 and Cys-188. Asn-100 carries an N-linked (GlcNAc...) asparagine glycan.

It belongs to the somatotropin/prolactin family. Expressed exclusively in decidua.

It localises to the secreted. In Mus musculus (Mouse), this protein is Prolactin-3C1 (Prl3c1).